The chain runs to 169 residues: Steroid receptor-associated and regulated protein (169 aa).

As to quaternary structure, interacts with 14-3-3 proteins. As to expression, expressed in breast tumors with a higher expression level in estrogen receptor-positive cancers.

May regulate the transcriptional function of androgen and estrogen receptors. This is Steroid receptor-associated and regulated protein from Homo sapiens (Human).